The sequence spans 546 residues: Chaperonin GroEL (546 aa).

ATP-binding positions include 30 to 33, lysine 51, 87 to 91, glycine 415, 479 to 481, and aspartate 495; these read TLGP, DGTTT, and NAA.

This sequence belongs to the chaperonin (HSP60) family. In terms of assembly, forms a cylinder of 14 subunits composed of two heptameric rings stacked back-to-back. Interacts with the co-chaperonin GroES.

It is found in the cytoplasm. It carries out the reaction ATP + H2O + a folded polypeptide = ADP + phosphate + an unfolded polypeptide.. Functionally, together with its co-chaperonin GroES, plays an essential role in assisting protein folding. The GroEL-GroES system forms a nano-cage that allows encapsulation of the non-native substrate proteins and provides a physical environment optimized to promote and accelerate protein folding. In Allochromatium vinosum (Chromatium vinosum), this protein is Chaperonin GroEL.